The chain runs to 384 residues: Alanine racemase (384 aa).

The active-site Proton acceptor; specific for D-alanine is the Lys-39. Lys-39 is modified (N6-(pyridoxal phosphate)lysine). Residue Arg-138 coordinates substrate. Tyr-265 acts as the Proton acceptor; specific for L-alanine in catalysis. Met-312 provides a ligand contact to substrate.

Belongs to the alanine racemase family. The cofactor is pyridoxal 5'-phosphate.

The enzyme catalyses L-alanine = D-alanine. The protein operates within amino-acid biosynthesis; D-alanine biosynthesis; D-alanine from L-alanine: step 1/1. Functionally, catalyzes the interconversion of L-alanine and D-alanine. May also act on other amino acids. The polypeptide is Alanine racemase (alr) (Staphylococcus carnosus (strain TM300)).